The following is a 763-amino-acid chain: Forkhead box protein M1 (763 aa).

Residues 1 to 53 (MKTSPRRPLILKRRRLPLPVQNAPSETSEEEPKRSPAQQESNQAEASKEVAES) are disordered. Polar residues predominate over residues 36 to 45 (PAQQESNQAE). Glycyl lysine isopeptide (Lys-Gly) (interchain with G-Cter in SUMO2) cross-links involve residues Lys163, Lys201, and Lys325. The segment at 198–232 (RSIKQEMEEKENCHLEQRQVKVEEPSRPSASWQNS) is disordered. Positions 200-223 (IKQEMEEKENCHLEQRQVKVEEPS) are enriched in basic and acidic residues. Residues 235–327 (ERPPYSYMAM…LTLDQVFKPL (93 aa)) constitute a DNA-binding region (fork-head). The segment at 329 to 351 (PGSPQLPEHLESQQKRPNPELRR) is disordered. Phosphoserine is present on Ser331. Residues 336-351 (EHLESQQKRPNPELRR) are compositionally biased toward basic and acidic residues. Lys356 is covalently cross-linked (Glycyl lysine isopeptide (Lys-Gly) (interchain with G-Cter in SUMO2)). Ser376 bears the Phosphoserine; by CHEK2 mark. Residues Lys422 and Lys440 each participate in a glycyl lysine isopeptide (Lys-Gly) (interchain with G-Cter in SUMO2) cross-link. The segment at 482–711 (PPLEEWPSPA…PGSPEPQVSG (230 aa)) is disordered. Ser489 carries the post-translational modification Phosphoserine; by GSK3. The span at 494 to 503 (FKEESSHSWE) shows a compositional bias: basic and acidic residues. Ser522 carries the post-translational modification Phosphoserine. Residues 583 to 592 (DPASQLSYSQ) show a composition bias toward polar residues. Thr611 is modified (phosphothreonine; by CDK1). A phosphothreonine mark is found at Thr620, Thr627, and Thr662. A Phosphoserine; by CDK1 modification is found at Ser693. Phosphoserine; by PLK1 occurs at positions 730 and 739.

Interacts with PINT87aa which is encoded by the circular form of the long non-coding RNA LINC-PINT; the interaction inhibits FOXM1-mediated transcription of PHB2. Post-translationally, phosphorylated in M (mitotic) phase. Phosphorylation by the checkpoint kinase CHEK2 in response to DNA damage increases the FOXM1 protein stability probably stimulating the transcription of genes involved in DNA repair. Phosphorylated by CDK1 in late S and G2 phases, creating docking sites for the POLO box domains of PLK1. Subsequently, PLK1 binds and phosphorylates FOXM1, leading to activation of transcriptional activity and subsequent enhanced expression of key mitotic regulators. Phosphorylated by GSK3B leading to ubiquitination and proteasomal degradation. In terms of processing, ubiquitinated in a FBXW7-dependent manner leading to proteasomal degradation. Expressed in thymus, testis, small intestine, colon followed by ovary. Appears to be expressed only in adult organs containing proliferating/cycling cells or in response to growth factors. Also expressed in epithelial cell lines derived from tumors. Not expressed in resting cells. Isoform 2 is highly expressed in testis.

The protein resides in the nucleus. In terms of biological role, transcription factor regulating the expression of cell cycle genes essential for DNA replication and mitosis. Plays a role in the control of cell proliferation. Also plays a role in DNA break repair, participating in the DNA damage checkpoint response. Promotes transcription of PHB2. The sequence is that of Forkhead box protein M1 (FOXM1) from Homo sapiens (Human).